Consider the following 523-residue polypeptide: La-related protein 1C (523 aa).

Over residues 1-16 (MASATSNNPASSSMSP) the composition is skewed to low complexity. 2 disordered regions span residues 1 to 52 (MASA…VRGE) and 95 to 313 (AAGD…VRHP). Ala2 is modified (N-acetylalanine). A compositionally biased stretch (polar residues) spans 22-31 (NHGSPTASVA). Low complexity-rich tracts occupy residues 32–44 (QSPR…VSSP) and 146–169 (SNKS…ASSS). Ser33 is subject to Phosphoserine. 2 stretches are compositionally biased toward polar residues: residues 206–270 (QRNG…NGNH) and 282–305 (HGNQ…SQRG). The HTH La-type RNA-binding domain occupies 363–452 (HYQDPPLHMK…RDNWQNWVLR (90 aa)). The tract at residues 474–523 (GNLSVDQSSADPIGGSSSQLQPTEALSDDQQQSSSTAPVSNHNAPDGANR) is disordered. Residues 477–516 (SVDQSSADPIGGSSSQLQPTEALSDDQQQSSSTAPVSNHN) are compositionally biased toward polar residues.

It belongs to the LARP family. In terms of tissue distribution, age-dependent accumulation in rosette leaves.

The protein resides in the cytoplasm. Functionally, promotes leaf senescence mediated by abscisic acid (ABA), salicylic acid (SA) and jasmonic acid (MeJA), probably though the induction of expression of senescence-associated genes (SAGs) and defense-related genes. This is La-related protein 1C (LARP1C) from Arabidopsis thaliana (Mouse-ear cress).